We begin with the raw amino-acid sequence, 123 residues long: uncharacterized protein (123 aa).

Residues 17–117 (SNDNAFLVDV…NNQDKGWKQN (101 aa)) enclose the Rhodanese domain.

This is an uncharacterized protein from Rickettsia rickettsii.